Reading from the N-terminus, the 196-residue chain is Probable nicotinate-nucleotide adenylyltransferase (196 aa).

The protein belongs to the NadD family.

It catalyses the reaction nicotinate beta-D-ribonucleotide + ATP + H(+) = deamido-NAD(+) + diphosphate. The protein operates within cofactor biosynthesis; NAD(+) biosynthesis; deamido-NAD(+) from nicotinate D-ribonucleotide: step 1/1. Its function is as follows. Catalyzes the reversible adenylation of nicotinate mononucleotide (NaMN) to nicotinic acid adenine dinucleotide (NaAD). The sequence is that of Probable nicotinate-nucleotide adenylyltransferase from Caldicellulosiruptor saccharolyticus (strain ATCC 43494 / DSM 8903 / Tp8T 6331).